The chain runs to 387 residues: Phosphoglycerate kinase (387 aa).

Residues 21–23, arginine 36, 59–62, arginine 113, and arginine 146 contribute to the substrate site; these read DLN and HLGR. Residues lysine 197, glutamate 314, and 340–343 contribute to the ATP site; that span reads GGDT.

The protein belongs to the phosphoglycerate kinase family. As to quaternary structure, monomer.

It localises to the cytoplasm. The enzyme catalyses (2R)-3-phosphoglycerate + ATP = (2R)-3-phospho-glyceroyl phosphate + ADP. It functions in the pathway carbohydrate degradation; glycolysis; pyruvate from D-glyceraldehyde 3-phosphate: step 2/5. The protein is Phosphoglycerate kinase of Yersinia pestis bv. Antiqua (strain Antiqua).